We begin with the raw amino-acid sequence, 156 residues long: Small ribosomal subunit protein uS7 (156 aa).

It belongs to the universal ribosomal protein uS7 family. Part of the 30S ribosomal subunit. Contacts proteins S9 and S11.

Its function is as follows. One of the primary rRNA binding proteins, it binds directly to 16S rRNA where it nucleates assembly of the head domain of the 30S subunit. Is located at the subunit interface close to the decoding center, probably blocks exit of the E-site tRNA. In Baumannia cicadellinicola subsp. Homalodisca coagulata, this protein is Small ribosomal subunit protein uS7.